Here is a 565-residue protein sequence, read N- to C-terminus: Salicyl-AMP ligase / salicyl-S-ArCP synthetase (565 aa).

ATP is bound by residues G214, G330, V352, D436, R451, and K542.

Belongs to the ATP-dependent AMP-binding enzyme family.

The enzyme catalyses salicylate + ATP + H(+) = 2-hydroxybenzoyl-5'-AMP + diphosphate. It carries out the reaction 2-hydroxybenzoyl-5'-AMP + holo-[ACP] = salicyl-[ACP] + AMP + H(+). It functions in the pathway siderophore biosynthesis; mycobactin biosynthesis. Inhibited by salicyl-AMS, an acyl-AMP analog. Also inhibited by 5'-O-[(N-acyl)sulfamoyl]adenosines. Functionally, involved in the initial steps of the mycobactin biosynthetic pathway. Catalyzes the salicylation of the aryl carrier protein (ArCP) domain of MbtB through a two-step reaction. The first step is the ATP-dependent adenylation of salicylate to generate a salicyl-AMP intermediate. The second step is the transfer of this activated salicylate to MbtB to form a salicyl-ArCP domain thioester. This Mycobacterium tuberculosis (strain ATCC 25618 / H37Rv) protein is Salicyl-AMP ligase / salicyl-S-ArCP synthetase.